The chain runs to 306 residues: tRNA dimethylallyltransferase (306 aa).

Residue 12 to 19 (GPTGTKKS) coordinates ATP.

Belongs to the IPP transferase family. In terms of assembly, monomer. Requires Mg(2+) as cofactor.

It carries out the reaction adenosine(37) in tRNA + dimethylallyl diphosphate = N(6)-dimethylallyladenosine(37) in tRNA + diphosphate. Functionally, catalyzes the transfer of a dimethylallyl group onto the adenine at position 37 in tRNAs that read codons beginning with uridine, leading to the formation of N6-(dimethylallyl)adenosine (i(6)A). In Mycoplasmoides gallisepticum (strain R(low / passage 15 / clone 2)) (Mycoplasma gallisepticum), this protein is tRNA dimethylallyltransferase.